A 95-amino-acid chain; its full sequence is Protein Vpr (95 aa).

The tract at residues 1–42 (MEQAPEDQGPQREPYNEWALELLEDLKNEALRHFPRPWLHGL) is homooligomerization. Residues S79, S93, and S95 each carry the phosphoserine; by host modification.

Belongs to the HIV-1 VPR protein family. As to quaternary structure, homooligomer, may form homodimer. Interacts with p6-gag region of the Pr55 Gag precursor protein through a (Leu-X-X)4 motif near the C-terminus of the P6gag protein. Interacts with host UNG. May interact with host RAD23A/HHR23A. Interacts with host VPRBP/DCAF1, leading to hijack the CUL4A-RBX1-DDB1-DCAF1/VPRBP complex, mediating ubiquitination of host proteins such as TERT and ZGPAT and arrest of the cell cycle in G2 phase. In terms of processing, phosphorylated on several residues by host. These phosphorylations regulate VPR activity for the nuclear import of the HIV-1 pre-integration complex.

It localises to the virion. The protein resides in the host nucleus. Its subcellular location is the host extracellular space. In terms of biological role, during virus replication, may deplete host UNG protein, and incude G2-M cell cycle arrest. Acts by targeting specific host proteins for degradation by the 26S proteasome, through association with the cellular CUL4A-DDB1 E3 ligase complex by direct interaction with host VPRPB/DCAF-1. Cell cycle arrest reportedly occurs within hours of infection and is not blocked by antiviral agents, suggesting that it is initiated by the VPR carried into the virion. Additionally, VPR induces apoptosis in a cell cycle dependent manner suggesting that these two effects are mechanistically linked. Detected in the serum and cerebrospinal fluid of AIDS patient, VPR may also induce cell death to bystander cells. Functionally, during virus entry, plays a role in the transport of the viral pre-integration (PIC) complex to the host nucleus. This function is crucial for viral infection of non-dividing macrophages. May act directly at the nuclear pore complex, by binding nucleoporins phenylalanine-glycine (FG)-repeat regions. The polypeptide is Protein Vpr (Pan troglodytes (Chimpanzee)).